Reading from the N-terminus, the 133-residue chain is S-adenosylmethionine decarboxylase proenzyme (133 aa).

S64 functions as the Schiff-base intermediate with substrate; via pyruvic acid in the catalytic mechanism. S64 is subject to Pyruvic acid (Ser); by autocatalysis. H69 (proton acceptor; for processing activity) is an active-site residue. C84 acts as the Proton donor; for catalytic activity in catalysis.

It belongs to the prokaryotic AdoMetDC family. Type 1 subfamily. Heterotetramer of two alpha and two beta chains arranged as a dimer of alpha/beta heterodimers. It depends on pyruvate as a cofactor. In terms of processing, is synthesized initially as an inactive proenzyme. Formation of the active enzyme involves a self-maturation process in which the active site pyruvoyl group is generated from an internal serine residue via an autocatalytic post-translational modification. Two non-identical subunits are generated from the proenzyme in this reaction, and the pyruvate is formed at the N-terminus of the alpha chain, which is derived from the carboxyl end of the proenzyme. The post-translation cleavage follows an unusual pathway, termed non-hydrolytic serinolysis, in which the side chain hydroxyl group of the serine supplies its oxygen atom to form the C-terminus of the beta chain, while the remainder of the serine residue undergoes an oxidative deamination to produce ammonia and the pyruvoyl group blocking the N-terminus of the alpha chain.

The catalysed reaction is S-adenosyl-L-methionine + H(+) = S-adenosyl 3-(methylsulfanyl)propylamine + CO2. The protein operates within amine and polyamine biosynthesis; S-adenosylmethioninamine biosynthesis; S-adenosylmethioninamine from S-adenosyl-L-methionine: step 1/1. In terms of biological role, catalyzes the decarboxylation of S-adenosylmethionine to S-adenosylmethioninamine (dcAdoMet), the propylamine donor required for the synthesis of the polyamines spermine and spermidine from the diamine putrescine. This Sulfurihydrogenibium sp. (strain YO3AOP1) protein is S-adenosylmethionine decarboxylase proenzyme.